The sequence spans 427 residues: Glutamate-1-semialdehyde 2,1-aminomutase (427 aa).

Lys265 carries the N6-(pyridoxal phosphate)lysine modification.

This sequence belongs to the class-III pyridoxal-phosphate-dependent aminotransferase family. HemL subfamily. In terms of assembly, homodimer. The cofactor is pyridoxal 5'-phosphate.

It localises to the cytoplasm. The enzyme catalyses (S)-4-amino-5-oxopentanoate = 5-aminolevulinate. Its pathway is porphyrin-containing compound metabolism; protoporphyrin-IX biosynthesis; 5-aminolevulinate from L-glutamyl-tRNA(Glu): step 2/2. This chain is Glutamate-1-semialdehyde 2,1-aminomutase, found in Burkholderia pseudomallei (strain 1710b).